Consider the following 126-residue polypeptide: Arginine decarboxylase proenzyme (126 aa).

Residue serine 74 is the Schiff-base intermediate with substrate; via pyruvic acid of the active site. A Pyruvic acid (Ser); by autocatalysis modification is found at serine 74. Histidine 79 acts as the Proton acceptor; for processing activity in catalysis. Catalysis depends on cysteine 94, which acts as the Proton donor; for catalytic activity.

The protein belongs to the prokaryotic AdoMetDC family. Type 1 subfamily. Heterooctamer of four alpha and four beta chains arranged as a tetramer of alpha/beta heterodimers. Requires pyruvate as cofactor. In terms of processing, is synthesized initially as an inactive proenzyme. Formation of the active enzyme involves a self-maturation process in which the active site pyruvoyl group is generated from an internal serine residue via an autocatalytic post-translational modification. Two non-identical subunits are generated from the proenzyme in this reaction, and the pyruvate is formed at the N-terminus of the alpha chain, which is derived from the carboxyl end of the proenzyme. The post-translation cleavage follows an unusual pathway, termed non-hydrolytic serinolysis, in which the side chain hydroxyl group of the serine supplies its oxygen atom to form the C-terminus of the beta chain, while the remainder of the serine residue undergoes an oxidative deamination to produce ammonia and the pyruvoyl group blocking the N-terminus of the alpha chain.

It catalyses the reaction L-arginine + H(+) = agmatine + CO2. Its pathway is amine and polyamine biosynthesis; agmatine biosynthesis; agmatine from L-arginine: step 1/1. Its function is as follows. Specifically catalyzes the decarboxylation of L-arginine to agmatine. Has no S-adenosylmethionine decarboxylase (AdoMetDC) activity. The protein is Arginine decarboxylase proenzyme of Pyrobaculum aerophilum (strain ATCC 51768 / DSM 7523 / JCM 9630 / CIP 104966 / NBRC 100827 / IM2).